Here is a 334-residue protein sequence, read N- to C-terminus: HTH-type transcriptional regulator RegA (334 aa).

Residues 1–57 form the HTH lacI-type domain; that stretch reads MAASIKDVAREARVSIATVSRVLNNVDVVNEETKKKVMEAIKKLDYRPNIVARSLKT. The H-T-H motif DNA-binding region spans 5–24; it reads IKDVAREARVSIATVSRVLN.

Involved in the regulation of amylase production. The polypeptide is HTH-type transcriptional regulator RegA (regA) (Clostridium acetobutylicum (strain ATCC 824 / DSM 792 / JCM 1419 / IAM 19013 / LMG 5710 / NBRC 13948 / NRRL B-527 / VKM B-1787 / 2291 / W)).